The sequence spans 342 residues: Olfactory receptor 51F2 (342 aa).

At 1-39 (MTETSLSSQCFPMSVLNNTIAEPLIFLLMGIPGLKATQY) the chain is on the extracellular side. N17 carries N-linked (GlcNAc...) asparagine glycosylation. Residues 40 to 60 (WISIPFCLLYVVAVSGNSMIL) traverse the membrane as a helical segment. The Cytoplasmic segment spans residues 61 to 68 (FVVLCERS). A helical membrane pass occupies residues 69-89 (LHKPMYYFLSMLSATDLSLSL). The Extracellular segment spans residues 90 to 113 (CTLSTTLGVFWFEAREINLNACIA). A disulfide bond links C111 and C203. A helical transmembrane segment spans residues 114–134 (QMFFLHGFTFMESGVLLAMAF). Topologically, residues 135 to 153 (DRFVAICYPLRYTTILTNA) are cytoplasmic. A helical membrane pass occupies residues 154–174 (RIAKIGMSMLIRNVAVMLPVM). At 175 to 210 (LFVKRLSFCSSMVLSHSYCYHVDLIQLSCTDNRINS) the chain is on the extracellular side. A helical membrane pass occupies residues 211-231 (ILGLFALLSTTGFDCPCILLS). Residues 232 to 251 (YILIIRSVLSIASSEERRKA) are Cytoplasmic-facing. A helical membrane pass occupies residues 252–272 (FNTCTSHISAVSIFYLPLISL). Topologically, residues 273 to 287 (SLVHRYGHSAPPFVH) are extracellular. A helical membrane pass occupies residues 288–308 (IIMANVFLLIPPVLNPIIYSV). The Cytoplasmic segment spans residues 309–342 (KIKQIQKAIIKVLIQKHSKSNHQLFLIRDKAIYE).

The protein belongs to the G-protein coupled receptor 1 family.

It is found in the cell membrane. Odorant receptor. This chain is Olfactory receptor 51F2 (OR51F2), found in Homo sapiens (Human).